The following is a 222-amino-acid chain: Deoxyribose-phosphate aldolase (222 aa).

Aspartate 90 (proton donor/acceptor) is an active-site residue. Lysine 152 serves as the catalytic Schiff-base intermediate with acetaldehyde. Catalysis depends on lysine 181, which acts as the Proton donor/acceptor.

This sequence belongs to the DeoC/FbaB aldolase family. DeoC type 1 subfamily.

It localises to the cytoplasm. The catalysed reaction is 2-deoxy-D-ribose 5-phosphate = D-glyceraldehyde 3-phosphate + acetaldehyde. It functions in the pathway carbohydrate degradation; 2-deoxy-D-ribose 1-phosphate degradation; D-glyceraldehyde 3-phosphate and acetaldehyde from 2-deoxy-alpha-D-ribose 1-phosphate: step 2/2. Its function is as follows. Catalyzes a reversible aldol reaction between acetaldehyde and D-glyceraldehyde 3-phosphate to generate 2-deoxy-D-ribose 5-phosphate. This is Deoxyribose-phosphate aldolase from Pectobacterium carotovorum subsp. carotovorum (strain PC1).